A 210-amino-acid chain; its full sequence is Glutathione S-transferase 2 (210 aa).

The region spanning 1 to 80 (MDFYYLPLSA…YLVEKYGKQN (80 aa)) is the GST N-terminal domain. Glutathione contacts are provided by residues serine 9, 50-52 (HTI), and 64-66 (ESR). A GST C-terminal domain is found at 87-208 (CPKKRALINQ…AGCLEMKKYF (122 aa)).

It belongs to the GST superfamily. Theta family. In terms of assembly, homodimer.

It catalyses the reaction RX + glutathione = an S-substituted glutathione + a halide anion + H(+). Conjugation of reduced glutathione to a wide number of exogenous and endogenous hydrophobic electrophiles. This Musca domestica (House fly) protein is Glutathione S-transferase 2 (Gst2).